The chain runs to 207 residues: Guanylate kinase (207 aa).

In terms of domain architecture, Guanylate kinase-like spans 5–184 (GNLFIVSAPS…ALADLKSIIF (180 aa)). 12 to 19 (APSGAGKS) provides a ligand contact to ATP.

This sequence belongs to the guanylate kinase family.

Its subcellular location is the cytoplasm. It carries out the reaction GMP + ATP = GDP + ADP. Functionally, essential for recycling GMP and indirectly, cGMP. The protein is Guanylate kinase of Shewanella denitrificans (strain OS217 / ATCC BAA-1090 / DSM 15013).